A 137-amino-acid polypeptide reads, in one-letter code: Small ribosomal subunit protein uS19 (137 aa).

A disordered region spans residues 115–137 (RNRVSHGSAGVGATRSSKFVPLK).

This sequence belongs to the universal ribosomal protein uS19 family.

Protein S19 forms a complex with S13 that binds strongly to the 16S ribosomal RNA. In Methanococcoides burtonii (strain DSM 6242 / NBRC 107633 / OCM 468 / ACE-M), this protein is Small ribosomal subunit protein uS19.